The sequence spans 272 residues: Ribosomal RNA small subunit methyltransferase A (272 aa).

S-adenosyl-L-methionine contacts are provided by asparagine 18, leucine 20, glycine 45, glutamate 66, aspartate 91, and asparagine 113.

It belongs to the class I-like SAM-binding methyltransferase superfamily. rRNA adenine N(6)-methyltransferase family. RsmA subfamily.

The protein localises to the cytoplasm. It carries out the reaction adenosine(1518)/adenosine(1519) in 16S rRNA + 4 S-adenosyl-L-methionine = N(6)-dimethyladenosine(1518)/N(6)-dimethyladenosine(1519) in 16S rRNA + 4 S-adenosyl-L-homocysteine + 4 H(+). Specifically dimethylates two adjacent adenosines (A1518 and A1519) in the loop of a conserved hairpin near the 3'-end of 16S rRNA in the 30S particle. May play a critical role in biogenesis of 30S subunits. The chain is Ribosomal RNA small subunit methyltransferase A from Yersinia pseudotuberculosis serotype O:1b (strain IP 31758).